Consider the following 75-residue polypeptide: Translational regulator CsrA (75 aa).

It belongs to the CsrA/RsmA family. In terms of assembly, homodimer; the beta-strands of each monomer intercalate to form a hydrophobic core, while the alpha-helices form wings that extend away from the core.

The protein localises to the cytoplasm. Its function is as follows. A translational regulator that binds mRNA to regulate translation initiation and/or mRNA stability. Usually binds in the 5'-UTR at or near the Shine-Dalgarno sequence preventing ribosome-binding, thus repressing translation. Its main target seems to be the major flagellin gene, while its function is anatagonized by FliW. The protein is Translational regulator CsrA of Exiguobacterium sp. (strain ATCC BAA-1283 / AT1b).